The chain runs to 173 residues: Large ribosomal subunit protein uL10 (173 aa).

This sequence belongs to the universal ribosomal protein uL10 family. As to quaternary structure, part of the ribosomal stalk of the 50S ribosomal subunit. The N-terminus interacts with L11 and the large rRNA to form the base of the stalk. The C-terminus forms an elongated spine to which L12 dimers bind in a sequential fashion forming a multimeric L10(L12)X complex.

Functionally, forms part of the ribosomal stalk, playing a central role in the interaction of the ribosome with GTP-bound translation factors. This chain is Large ribosomal subunit protein uL10, found in Thiobacillus denitrificans (strain ATCC 25259 / T1).